The primary structure comprises 371 residues: 4-hydroxy-3-methylbut-2-en-1-yl diphosphate synthase (flavodoxin) (371 aa).

[4Fe-4S] cluster contacts are provided by Cys-269, Cys-272, Cys-304, and Glu-311.

Belongs to the IspG family. [4Fe-4S] cluster serves as cofactor.

It carries out the reaction (2E)-4-hydroxy-3-methylbut-2-enyl diphosphate + oxidized [flavodoxin] + H2O + 2 H(+) = 2-C-methyl-D-erythritol 2,4-cyclic diphosphate + reduced [flavodoxin]. Its pathway is isoprenoid biosynthesis; isopentenyl diphosphate biosynthesis via DXP pathway; isopentenyl diphosphate from 1-deoxy-D-xylulose 5-phosphate: step 5/6. Converts 2C-methyl-D-erythritol 2,4-cyclodiphosphate (ME-2,4cPP) into 1-hydroxy-2-methyl-2-(E)-butenyl 4-diphosphate. The chain is 4-hydroxy-3-methylbut-2-en-1-yl diphosphate synthase (flavodoxin) from Acinetobacter baylyi (strain ATCC 33305 / BD413 / ADP1).